An 880-amino-acid polypeptide reads, in one-letter code: Alanine--tRNA ligase (880 aa).

Zn(2+) is bound by residues H567, H571, C669, and H673.

Belongs to the class-II aminoacyl-tRNA synthetase family. Requires Zn(2+) as cofactor.

It is found in the cytoplasm. It catalyses the reaction tRNA(Ala) + L-alanine + ATP = L-alanyl-tRNA(Ala) + AMP + diphosphate. Catalyzes the attachment of alanine to tRNA(Ala) in a two-step reaction: alanine is first activated by ATP to form Ala-AMP and then transferred to the acceptor end of tRNA(Ala). Also edits incorrectly charged Ser-tRNA(Ala) and Gly-tRNA(Ala) via its editing domain. In Bacillus thuringiensis subsp. konkukian (strain 97-27), this protein is Alanine--tRNA ligase.